We begin with the raw amino-acid sequence, 40 residues long: Lucifensin (40 aa).

3 disulfide bridges follow: C3-C30, C16-C36, and C20-C38.

It belongs to the invertebrate defensin family. Type 1 subfamily. Post-translationally, the disulfide bonds are essential for antimicrobial activity. In terms of tissue distribution, larval fat body, hemolymph and salivary glands (at protein level).

The protein resides in the secreted. In terms of biological role, shows strong antibacterial activity against the Gram-positive bacterium M.luteus. Also shows antibacterial activity against the Gram-positive bacteria E.fecalis, S.aureus, S.carnosus, S.pneumoniae and S.pyogenes and against a number of methicillin-resistant S.aureus and glycopeptide-intermediate S.aureus isolates. Does not show antibacterial activity against Gram-negative bacteria or antifungal activity against C.utilis. Shows slight antifungal activity against C.albicans. This Lucilia cuprina (Green bottle fly) protein is Lucifensin.